Reading from the N-terminus, the 305-residue chain is UDP-N-acetylenolpyruvoylglucosamine reductase 2 (305 aa).

The region spanning 33 to 197 is the FAD-binding PCMH-type domain; sequence VGGKADVFVA…LEARFELEEG (165 aa). Arginine 176 is a catalytic residue. Serine 226 acts as the Proton donor in catalysis. The active site involves glutamate 296.

It belongs to the MurB family. The cofactor is FAD.

It is found in the cytoplasm. It catalyses the reaction UDP-N-acetyl-alpha-D-muramate + NADP(+) = UDP-N-acetyl-3-O-(1-carboxyvinyl)-alpha-D-glucosamine + NADPH + H(+). It participates in cell wall biogenesis; peptidoglycan biosynthesis. In terms of biological role, cell wall formation. The polypeptide is UDP-N-acetylenolpyruvoylglucosamine reductase 2 (murB2) (Bacillus cereus (strain ATCC 14579 / DSM 31 / CCUG 7414 / JCM 2152 / NBRC 15305 / NCIMB 9373 / NCTC 2599 / NRRL B-3711)).